Reading from the N-terminus, the 851-residue chain is Glycogen phosphorylase, liver form (851 aa).

Ala2 is subject to N-acetylalanine. The residue at position 15 (Ser15) is a Phosphoserine; by PHK; in form phosphorylase a. AMP is bound by residues 43–45 (DRN), Tyr76, and Arg310. Lys364 carries the post-translational modification N6-succinyllysine. At Lys470 the chain carries N6-acetyllysine. Residues Ser524, Ser561, and Ser639 each carry the phosphoserine modification. Lys681 is subject to N6-(pyridoxal phosphate)lysine. Lys796 is subject to N6-acetyllysine.

It belongs to the glycogen phosphorylase family. As to quaternary structure, homodimer; enzymatically active. Interacts with PPP1R3B; recruits the phosphatase PP1 which dephosphorylates and inactivates PYGL/glycogen phosphorylase. Pyridoxal 5'-phosphate serves as cofactor. Acetylation, which is up-regulated by glucose and insulin and down-regulated by glucagon, inhibits the glycogen phosphorylase activity by promoting PPP1R3B-mediated recruitment of phosphatase PP1 and Ser-15 dephosphorylation. In terms of processing, phosphorylation at Ser-15 converts inactive phosphorylase b into active phosphorylase a. Dephosphorylation of Ser-15 by phosphatase PP1 inactivates the enzyme.

The protein resides in the cytoplasm. Its subcellular location is the cytosol. It carries out the reaction [(1-&gt;4)-alpha-D-glucosyl](n) + phosphate = [(1-&gt;4)-alpha-D-glucosyl](n-1) + alpha-D-glucose 1-phosphate. Its activity is regulated as follows. Allosterically regulated through the non-covalent binding of metabolites, being activated by AMP and inhibited by ATP, ADP, and glucose-6-phosphate. The activity is also controlled by post-translational modifications including phosphorylation and acetylation. Functionally, allosteric enzyme that catalyzes the rate-limiting step in glycogen catabolism, the phosphorolytic cleavage of glycogen to produce glucose-1-phosphate, and plays a central role in maintaining cellular and organismal glucose homeostasis. In Bos taurus (Bovine), this protein is Glycogen phosphorylase, liver form.